A 161-amino-acid polypeptide reads, in one-letter code: Ribosome maturation factor RimP (161 aa).

It belongs to the RimP family.

The protein localises to the cytoplasm. Required for maturation of 30S ribosomal subunits. This Rickettsia massiliae (strain Mtu5) protein is Ribosome maturation factor RimP.